The primary structure comprises 310 residues: 1-aminocyclopropane-1-carboxylate oxidase 1 (310 aa).

Residues 113–133 (EELSKTMDEYVCQLHKFAERL) are a coiled coil. Positions 158 to 259 (PAFGTKVAKY…RLSIATFYNP (102 aa)) constitute a Fe2OG dioxygenase domain. Fe cation contacts are provided by His182, Asp184, and His240. Arg250 lines the 2-oxoglutarate pocket.

The protein belongs to the iron/ascorbate-dependent oxidoreductase family. Fe(2+) is required as a cofactor.

It catalyses the reaction 1-aminocyclopropane-1-carboxylate + L-ascorbate + O2 = ethene + L-dehydroascorbate + hydrogen cyanide + CO2 + 2 H2O. It functions in the pathway alkene biosynthesis; ethylene biosynthesis via S-adenosyl-L-methionine; ethylene from S-adenosyl-L-methionine: step 2/2. Its function is as follows. Enzyme involved in the ethylene biosynthesis. May promote stem elongation by maximizing the extensibility cells, possibly by activating ethylene biosynthesis, in response to very-long-chain fatty acids (VLCFAs C20:0 to C30:0). This chain is 1-aminocyclopropane-1-carboxylate oxidase 1 (ACO1), found in Arabidopsis thaliana (Mouse-ear cress).